The chain runs to 553 residues: Transcription factor GAMYB (553 aa).

Over residues 1–17 the composition is skewed to basic and acidic residues; that stretch reads MYRVKSESDCEMIHQEQ. The tract at residues 1–45 is disordered; that stretch reads MYRVKSESDCEMIHQEQMDSPVADDGSSGGSPHRGGGPPLKKGPW. A compositionally biased stretch (gly residues) spans 27–38; the sequence is SSGGSPHRGGGP. 2 HTH myb-type domains span residues 37-89 and 90-144; these read GPPL…ANHL and RPNL…KRCQ. DNA-binding regions (H-T-H motif) lie at residues 65–89 and 117–140; these read WNAV…ANHL and WARM…NTRI. The interval 464–488 is disordered; the sequence is PAQSTSMGSGEQVMGPKYEPGDTSP.

It localises to the nucleus. Functionally, transcriptional activator of gibberellin-dependent alpha-amylase expression in aleurone cells. Involved in pollen and floral organs development. May bind to the 5'-TAACAAA-3' box of alpha-amylase promoter. The polypeptide is Transcription factor GAMYB (GAM1) (Oryza sativa subsp. indica (Rice)).